We begin with the raw amino-acid sequence, 598 residues long: Eukaryotic translation initiation factor 3 subunit D (598 aa).

The disordered stretch occupies residues 104–178; that stretch reads VKTRGFGRGG…YDKPQRNRDS (75 aa). Residues 109–132 are compositionally biased toward gly residues; the sequence is FGRGGGTIFRGRGQRGGAQRGRGG. Residues 165–177 are compositionally biased toward basic and acidic residues; sequence GWKDYDKPQRNRD. Residues 304-318 form an RNA gate region; sequence SIDLVTVNENAADAP. A disordered region spans residues 574 to 598; it reads NTFEEEDDTGAKAEKDEESEEKDEE. Over residues 589–598 the composition is skewed to acidic residues; the sequence is DEESEEKDEE.

This sequence belongs to the eIF-3 subunit D family. Component of the eukaryotic translation initiation factor 3 (eIF-3) complex.

The protein resides in the cytoplasm. Functionally, mRNA cap-binding component of the eukaryotic translation initiation factor 3 (eIF-3) complex, which is involved in protein synthesis of a specialized repertoire of mRNAs and, together with other initiation factors, stimulates binding of mRNA and methionyl-tRNAi to the 40S ribosome. The eIF-3 complex specifically targets and initiates translation of a subset of mRNAs involved in cell proliferation. In the eIF-3 complex, eif3d specifically recognizes and binds the 7-methylguanosine cap of a subset of mRNAs. The chain is Eukaryotic translation initiation factor 3 subunit D from Coccidioides immitis (strain RS) (Valley fever fungus).